Reading from the N-terminus, the 138-residue chain is FUN14 domain-containing protein fndc-1 (138 aa).

Transmembrane regions (helical) follow at residues 37–56 and 61–78; these read PMVQLGVGAGFGTVTGYFVT and LVAATVGISFLLAQFAIH. N-linked (GlcNAc...) asparagine glycans are attached at residues Asn85 and Asn111.

This sequence belongs to the FUN14 family. Broadly expressed in somatic tissues. Expressed in the hermaphrodite spermatheca and male gonad. Expressed in spermatids, but not expressed in oocytes.

It is found in the mitochondrion outer membrane. Mitophagy receptor which plays a role in paternal mitochondria degradation in embryos after the two-cell stage. This Caenorhabditis elegans protein is FUN14 domain-containing protein fndc-1.